A 300-amino-acid polypeptide reads, in one-letter code: Porphobilinogen deaminase (300 aa).

An S-(dipyrrolylmethanemethyl)cysteine modification is found at cysteine 239.

It belongs to the HMBS family. Monomer. Requires dipyrromethane as cofactor.

It catalyses the reaction 4 porphobilinogen + H2O = hydroxymethylbilane + 4 NH4(+). It functions in the pathway porphyrin-containing compound metabolism; protoporphyrin-IX biosynthesis; coproporphyrinogen-III from 5-aminolevulinate: step 2/4. Tetrapolymerization of the monopyrrole PBG into the hydroxymethylbilane pre-uroporphyrinogen in several discrete steps. In Francisella philomiragia subsp. philomiragia (strain ATCC 25017 / CCUG 19701 / FSC 153 / O#319-036), this protein is Porphobilinogen deaminase.